The sequence spans 791 residues: Probable phosphoketolase (791 aa).

The protein belongs to the XFP family. The cofactor is thiamine diphosphate.

This Pseudomonas putida (strain ATCC 700007 / DSM 6899 / JCM 31910 / BCRC 17059 / LMG 24140 / F1) protein is Probable phosphoketolase.